The chain runs to 96 residues: Small ribosomal subunit protein bS6 (96 aa).

It belongs to the bacterial ribosomal protein bS6 family.

Functionally, binds together with bS18 to 16S ribosomal RNA. The chain is Small ribosomal subunit protein bS6 from Nocardioides sp. (strain ATCC BAA-499 / JS614).